Here is a 50-residue protein sequence, read N- to C-terminus: Small ribosomal subunit protein eS31 (50 aa).

The Zn(2+) site is built by cysteine 22, cysteine 25, cysteine 40, and cysteine 43. Residues cysteine 22–cysteine 43 form a C4-type zinc finger.

It belongs to the eukaryotic ribosomal protein eS31 family. Part of the 30S ribosomal subunit. It depends on Zn(2+) as a cofactor.

In Pyrococcus furiosus (strain ATCC 43587 / DSM 3638 / JCM 8422 / Vc1), this protein is Small ribosomal subunit protein eS31.